The sequence spans 234 residues: MGEENEQRIGERVYEFLRREGKDEQKMRVTIPEVLNCQYGMYVWPCAVVLAQYLWYHRKNLADKRVLEVGAGVSLPGILAAKCGAKVILSDSAEMPQCLENCRRSCKMNNIVGVPVIGLTWGEVSPDLLDLPPIDIILGSDVFYEPKDFEDILLTVRFLMERMPQAEFWTTYQVRSADWSVEALLCKWNLKCTNVPLKTFDADNECLAGSELPGRHTVQMMIITLDRKGAGHTG.

The protein belongs to the methyltransferase superfamily. METTL23 family.

It localises to the nucleus. The protein localises to the cytoplasm. It carries out the reaction L-arginyl-[protein] + 2 S-adenosyl-L-methionine = N(omega),N(omega)-dimethyl-L-arginyl-[protein] + 2 S-adenosyl-L-homocysteine + 2 H(+). Its function is as follows. Histone methyltransferase that dimethylates histone H3 at 'Arg-17', forming asymmetric dimethylarginine (H3R17me2a), leading to activate transcription via chromatin remodeling. This is Histone-arginine methyltransferase METTL23 (mettl23) from Xenopus laevis (African clawed frog).